The primary structure comprises 710 residues: uncharacterized protein (710 aa).

Residues Met-1–Glu-40 are disordered. The segment covering Pro-15–Pro-25 has biased composition (low complexity). An FHA domain is found at Val-108–Leu-165. Coiled-coil stretches lie at residues Thr-206–Glu-240, Glu-409–Gly-440, and Ala-471–Lys-502. The interval Ile-230 to Glu-250 is disordered. Disordered stretches follow at residues Glu-535–Ser-560, Lys-591–Ser-619, and Glu-671–Tyr-710. The span at Gln-538 to Ser-560 shows a compositional bias: polar residues. Residues Gln-613 to Arg-661 adopt a coiled-coil conformation.

This is an uncharacterized protein from Caenorhabditis elegans.